Consider the following 150-residue polypeptide: MKAIFIILAILMVTQAFKMTSKVNTKLQSQIQSKFQSKNKLASTFQTSSKLKGECDTIIPDFTGCNANDACPLSFTCSATGNDEQLCNAAGQNVIDMIFAHWSTCWNTYGNCIEFARQTYAIYNAPELCGCDYVDEETWINTLESVCPYV.

The N-terminal stretch at 1–16 (MKAIFIILAILMVTQA) is a signal peptide. A propeptide spanning residues 17-52 (FKMTSKVNTKLQSQIQSKFQSKNKLASTFQTSSKLK) is cleaved from the precursor.

The protein resides in the secreted. In terms of biological role, mating ciliate pheromones (or gamones) are diffusible extracellular communication signals that distinguish different intraspecific classes of cells commonly referred to as 'mating types'. They prepare the latter for conjugation by changing their cell surface properties. This is Mating pheromone 1 from Euplotoides octocarinatus (Freshwater ciliate).